Reading from the N-terminus, the 456-residue chain is Bifunctional protein GlmU (456 aa).

Residues 1–228 (MTLPLHVLIL…PQDVEGANDP (228 aa)) form a pyrophosphorylase region. Residues 10-13 (LAAG), lysine 24, glutamine 76, 81-82 (GT), 103-105 (YGD), glycine 138, glutamate 153, asparagine 168, and asparagine 226 each bind UDP-N-acetyl-alpha-D-glucosamine. Aspartate 105 contributes to the Mg(2+) binding site. Asparagine 226 is a binding site for Mg(2+). The segment at 229 to 249 (WQLAQLERAWQLRAARTLCLQ) is linker. The tract at residues 250–456 (GVRMADPARV…GWKRPTKKSP (207 aa)) is N-acetyltransferase. UDP-N-acetyl-alpha-D-glucosamine contacts are provided by arginine 332 and lysine 350. The active-site Proton acceptor is histidine 362. The UDP-N-acetyl-alpha-D-glucosamine site is built by tyrosine 365 and asparagine 376. Acetyl-CoA is bound by residues alanine 379, 385–386 (NY), serine 404, alanine 422, and arginine 439.

This sequence in the N-terminal section; belongs to the N-acetylglucosamine-1-phosphate uridyltransferase family. It in the C-terminal section; belongs to the transferase hexapeptide repeat family. As to quaternary structure, homotrimer. It depends on Mg(2+) as a cofactor.

The protein resides in the cytoplasm. It carries out the reaction alpha-D-glucosamine 1-phosphate + acetyl-CoA = N-acetyl-alpha-D-glucosamine 1-phosphate + CoA + H(+). The enzyme catalyses N-acetyl-alpha-D-glucosamine 1-phosphate + UTP + H(+) = UDP-N-acetyl-alpha-D-glucosamine + diphosphate. It participates in nucleotide-sugar biosynthesis; UDP-N-acetyl-alpha-D-glucosamine biosynthesis; N-acetyl-alpha-D-glucosamine 1-phosphate from alpha-D-glucosamine 6-phosphate (route II): step 2/2. Its pathway is nucleotide-sugar biosynthesis; UDP-N-acetyl-alpha-D-glucosamine biosynthesis; UDP-N-acetyl-alpha-D-glucosamine from N-acetyl-alpha-D-glucosamine 1-phosphate: step 1/1. The protein operates within bacterial outer membrane biogenesis; LPS lipid A biosynthesis. Functionally, catalyzes the last two sequential reactions in the de novo biosynthetic pathway for UDP-N-acetylglucosamine (UDP-GlcNAc). The C-terminal domain catalyzes the transfer of acetyl group from acetyl coenzyme A to glucosamine-1-phosphate (GlcN-1-P) to produce N-acetylglucosamine-1-phosphate (GlcNAc-1-P), which is converted into UDP-GlcNAc by the transfer of uridine 5-monophosphate (from uridine 5-triphosphate), a reaction catalyzed by the N-terminal domain. This is Bifunctional protein GlmU from Xanthomonas axonopodis pv. citri (strain 306).